A 214-amino-acid chain; its full sequence is Alpha-S1-casein (214 aa).

The signal sequence occupies residues 1–15; the sequence is MKLLILTCLVAVALA. A disordered region spans residues 59–91; that stretch reads IGSESTEDQAMEDAKQMKAGSSSSSEEIVPNSA. S61, S63, S79, S80, S81, S82, S83, S90, and S130 each carry phosphoserine.

The protein belongs to the alpha-casein family. As to expression, mammary gland specific. Secreted in milk.

It localises to the secreted. Important role in the capacity of milk to transport calcium phosphate. The chain is Alpha-S1-casein (CSN1S1) from Capra hircus (Goat).